The following is a 258-amino-acid chain: Redox-sensing transcriptional repressor Rex (258 aa).

Positions 26-65 form a DNA-binding region, H-T-H motif; sequence LYLRALTALSERSVPTVSSEELAAAAGVNSAKLRKDFSYL. 100–105 provides a ligand contact to NAD(+); the sequence is GIGNLG. The disordered stretch occupies residues 219–258; it reads AGEEAAADGAAPPVAARKQQRSTGSADQGPDGDVPAVMPA. The span at 225–234 shows a compositional bias: low complexity; the sequence is ADGAAPPVAA.

It belongs to the transcriptional regulatory Rex family. In terms of assembly, homodimer.

It localises to the cytoplasm. Modulates transcription of respiratory genes in response to changes in cellular NADH/NAD(+) redox state. Binds to the DNA sequence motif 5'-TGTGAACGCGTTCACA-3' in the promoter of the cydABCD operon. May play a general role as a sensor of cellular redox balance. The protein is Redox-sensing transcriptional repressor Rex of Streptomyces coelicolor (strain ATCC BAA-471 / A3(2) / M145).